The following is a 337-amino-acid chain: Heme A synthase (337 aa).

The next 5 helical transmembrane spans lie at 6–26 (ITKWLCISCIMVIATIVIGGI), 87–107 (FIHRLLGRITALIYIVPLIYF), 119–139 (LPYIIALWLFCVQGFMGWYMV), 154–174 (LAFHLIIAVIIYHILFYQLIK), and 192–212 (LIFSGIAITVVYVQIFLGALV). Heme is bound at residue histidine 256. 3 helical membrane passes run 258-278 (LGGYSVFLVVVVLIICLLKIE), 285-305 (IAYFLMIALLMQVSTGIITLL), and 308-328 (VPIIIASIHQLFAVILLSIII). Histidine 316 serves as a coordination point for heme.

Belongs to the COX15/CtaA family. Type 2 subfamily. In terms of assembly, interacts with CtaB. The cofactor is heme b.

The protein resides in the cell membrane. It catalyses the reaction Fe(II)-heme o + 2 A + H2O = Fe(II)-heme a + 2 AH2. It functions in the pathway porphyrin-containing compound metabolism; heme A biosynthesis; heme A from heme O: step 1/1. In terms of biological role, catalyzes the conversion of heme O to heme A by two successive hydroxylations of the methyl group at C8. The first hydroxylation forms heme I, the second hydroxylation results in an unstable dihydroxymethyl group, which spontaneously dehydrates, resulting in the formyl group of heme A. In Rickettsia massiliae (strain Mtu5), this protein is Heme A synthase.